Here is an 878-residue protein sequence, read N- to C-terminus: Probable di- and tripeptidase DUG2 (878 aa).

5 WD repeats span residues 18–57, 68–107, 235–274, 282–322, and 362–405; these read NHAFSILSIVAFPKKRLLFAGSQDSKILVFDLPTYNLIHT, HTRSSVLCLTGSEDENFLFSGGADSLVRIWSIGEKTIRDD, RFNQLLEKSSRTSGAEHIISSAGDGISKLWEFSKDKGQNT, DKID…IIST, and PQQG…SAVP. His520 lines the Zn(2+) pocket. Asp522 is an active-site residue. Asp553 contacts Zn(2+). Glu586 (proton acceptor) is an active-site residue. A Zn(2+)-binding site is contributed by Glu587. A WD 6 repeat occupies 608–651; it reads IDWILLSNSTWVDQEHPCLNYGLRGVINAQIKVWSDKPDGHSGL. His853 provides a ligand contact to Zn(2+).

The protein belongs to the peptidase M20A family. In terms of assembly, component of the GSH degradosomal complex composed of at least DUG1, DUG2 and DUG3. It depends on Zn(2+) as a cofactor.

Its subcellular location is the cytoplasm. It is found in the nucleus. Functionally, component of the GSH degradosomal complex involved in the degradation of glutathione (GSH) and other peptides containing a gamma-glu-X bond. In Saccharomyces cerevisiae (strain ATCC 204508 / S288c) (Baker's yeast), this protein is Probable di- and tripeptidase DUG2 (DUG2).